Reading from the N-terminus, the 281-residue chain is N-acetyltransferase ECO1 (281 aa).

The CCHH-type zinc finger occupies V33–H57. A disordered region spans residues L86 to S105. The span at P95–S105 shows a compositional bias: low complexity. An N6-acetyllysine; by autocatalysis modification is found at K223.

The protein belongs to the acetyltransferase family. ECO subfamily. In terms of assembly, binds specifically to CHL12, RFC1, RFC2, RFC3, RFC4, RFC5 and RAD24 when members of an RFC complex. Interacts with CHL1 and MPS3. Post-translationally, autoacetylates in vitro.

It is found in the nucleus. In terms of biological role, required for establishment of sister chromatid cohesion during S phase but not for its further maintenance during G2 or M phases or for loading the cohesin complex onto DNA. Interacts with the three known alternate replication factor C (RFC) complexes, suggesting that these complexes have essential but redundant activity in cohesion establishment. Acts by acetylating the cohesin complex component SMC3. In vitro, possesses acetyltransferase activity where it can acetylate itself and components of the cohesin complex (MCD1, IRR1 and PDS5), but is unable to acetylate histones. This is N-acetyltransferase ECO1 (ECO1) from Saccharomyces cerevisiae (strain ATCC 204508 / S288c) (Baker's yeast).